Consider the following 92-residue polypeptide: Islet amyloid polypeptide (92 aa).

An N-terminal signal peptide occupies residues 1-22; that stretch reads MCLLRLPVTLLVLCVALNELKA. Residues 23–34 constitute a propeptide that is removed on maturation; sequence TSIASDTGHQVG. C38 and C43 are disulfide-bonded. Y73 carries the tyrosine amide modification. Positions 77–92 are excised as a propeptide; the sequence is NAPQISDRELLHYLPL.

Belongs to the calcitonin family. In terms of assembly, can form homodimers. Interacts with IDE and INS. Interaction with INS inhibits homodimerization and fibril formation.

The protein resides in the secreted. In terms of biological role, amylin/IAPP is a glucoregulatory peptide hormone that plays an important role in the regulation of energy homeostasis. Selectively inhibits insulin-stimulated glucose utilization and glycogen deposition in muscle, while not affecting adipocyte glucose metabolism. IAPP function is mediated by the CALCR-RAMPs (AMYRs) receptor complexes. Amylin can also bind CALCR receptor in the absence of RAMPs, although it is more selective for AMYRs. The protein is Islet amyloid polypeptide (IAPP) of Cavia porcellus (Guinea pig).